Here is a 303-residue protein sequence, read N- to C-terminus: Recombination-associated protein RdgC (303 aa).

This sequence belongs to the RdgC family.

The protein resides in the cytoplasm. It is found in the nucleoid. Its function is as follows. May be involved in recombination. The sequence is that of Recombination-associated protein RdgC from Salmonella newport (strain SL254).